Consider the following 183-residue polypeptide: Der GTPase-activating protein YihI (183 aa).

A compositionally biased stretch (low complexity) spans 1–18; it reads MNQPSKAPRAPRSSAATP. The tract at residues 1-114 is disordered; the sequence is MNQPSKAPRA…EEELAKLEND (114 aa). Residues 25–34 show a composition bias toward basic and acidic residues; that stretch reads RAELDQEARE. Residues 56 to 65 show a composition bias toward low complexity; it reads NQKNKAAAQA. A compositionally biased stretch (basic and acidic residues) spans 92–114; that stretch reads PKAEAKPKPRLTPEEELAKLEND.

It belongs to the YihI family. As to quaternary structure, interacts with Der.

In terms of biological role, a GTPase-activating protein (GAP) that modifies Der/EngA GTPase function. May play a role in ribosome biogenesis. This is Der GTPase-activating protein YihI from Serratia proteamaculans (strain 568).